The primary structure comprises 214 residues: ER lumen protein-retaining receptor 3 (214 aa).

The Lumenal portion of the chain corresponds to 1–4; the sequence is MNVF. The helical transmembrane segment at 5–24 threads the bilayer; the sequence is RISGDVSHLLAIIILLLKMW. Residues 25–32 are Cytoplasmic-facing; sequence KSKSCAGI. A helical membrane pass occupies residues 33 to 52; that stretch reads SGKSQLLFALVFTTRYLDLF. Positions 47 to 48 are interaction with the K-D-E-L motif on target proteins; sequence RY. At 53–58 the chain is on the lumenal side; it reads TVFISA. The chain crosses the membrane as a helical span at residues 59 to 79; the sequence is YNTVMKIVFLVCAYVTVYLIY. Over 80-92 the chain is Cytoplasmic; that stretch reads GKFRKAYDSENDT. The helical transmembrane segment at 93–110 threads the bilayer; the sequence is FRLEFLLVPVIGLSFLEN. The Lumenal portion of the chain corresponds to 111 to 116; sequence YEFTPL. Residues 117 to 135 traverse the membrane as a helical segment; sequence EILWTFSIYLESVAILPQL. At 136-149 the chain is on the cytoplasmic side; it reads FMISKTGEAESITT. Residues 150–168 form a helical membrane-spanning segment; the sequence is HYLFFLGLYRVLYLANWIW. The interval 159–169 is interaction with the K-D-E-L motif on target proteins; the sequence is RVLYLANWIWR. Residues 169 to 178 are Lumenal-facing; sequence RYHTEKFYDQ. The helical transmembrane segment at 179–199 threads the bilayer; it reads IAVVSGVVQTIFYFDFFYLYI. Residues 200–214 lie on the Cytoplasmic side of the membrane; sequence TKVLKGKKLSLPMPV. Positions 204–207 are important for recycling of cargo proteins with the sequence motif K-D-E-L from the Golgi to the endoplasmic reticulum; it reads KGKK.

This sequence belongs to the ERD2 family.

The protein localises to the endoplasmic reticulum membrane. Its subcellular location is the golgi apparatus membrane. The protein resides in the cytoplasmic vesicle. It localises to the COPI-coated vesicle membrane. Receptor for the C-terminal sequence motif K-D-E-L that is present on endoplasmic reticulum resident proteins and that mediates their recycling from the Golgi back to the endoplasmic reticulum. This Xenopus tropicalis (Western clawed frog) protein is ER lumen protein-retaining receptor 3 (kdelr3).